A 130-amino-acid polypeptide reads, in one-letter code: Small ribosomal subunit protein uS8 (130 aa).

This sequence belongs to the universal ribosomal protein uS8 family. Part of the 30S ribosomal subunit. Contacts proteins S5 and S12.

In terms of biological role, one of the primary rRNA binding proteins, it binds directly to 16S rRNA central domain where it helps coordinate assembly of the platform of the 30S subunit. The polypeptide is Small ribosomal subunit protein uS8 (Acidiphilium cryptum (strain JF-5)).